Reading from the N-terminus, the 350-residue chain is Peptide-N(4)-(N-acetyl-beta-glucosaminyl)asparagine amidase (350 aa).

Zn(2+) is bound by residues cysteine 123, cysteine 126, cysteine 157, and cysteine 160. Cysteine 183 acts as the Nucleophile in catalysis. Catalysis depends on residues histidine 210 and aspartate 227. Glutamate 230 lines the substrate pocket. The segment at 324–350 (EIPPAAGAAGRQSGSADWKRQRGEDGR) is disordered. Over residues 340 to 350 (DWKRQRGEDGR) the composition is skewed to basic and acidic residues.

It belongs to the transglutaminase-like superfamily. PNGase family. Requires Zn(2+) as cofactor.

The protein resides in the cytoplasm. The catalysed reaction is Hydrolysis of an N(4)-(acetyl-beta-D-glucosaminyl)asparagine residue in which the glucosamine residue may be further glycosylated, to yield a (substituted) N-acetyl-beta-D-glucosaminylamine and a peptide containing an aspartate residue.. Functionally, specifically deglycosylates the denatured form of N-linked glycoproteins in the cytoplasm and assists their proteasome-mediated degradation. Cleaves the beta-aspartyl-glucosamine (GlcNAc) of the glycan and the amide side chain of Asn, converting Asn to Asp. Prefers proteins containing high-mannose over those bearing complex type oligosaccharides. Can recognize misfolded proteins in the endoplasmic reticulum that are exported to the cytosol to be destroyed and deglycosylate them, while it has no activity toward native proteins. Deglycosylation is a prerequisite for subsequent proteasome-mediated degradation of some, but not all, misfolded glycoproteins. The sequence is that of Peptide-N(4)-(N-acetyl-beta-glucosaminyl)asparagine amidase (PNG1) from Eremothecium gossypii (strain ATCC 10895 / CBS 109.51 / FGSC 9923 / NRRL Y-1056) (Yeast).